A 148-amino-acid chain; its full sequence is Sperm-specific protein PHI-2B (148 aa).

Residues 1 to 35 are compositionally biased toward basic residues; that stretch reads PSPSRRSRSRSRSRSKSPKRSPAKKARKTPKKRRA. Disordered stretches follow at residues 1–44 and 97–148; these read PSPS…KPST and GVLV…KSNN. An H15 domain is found at 40–119; that stretch reads KKPSTLSMIV…GATGSFRVGK (80 aa). Basic residues predominate over residues 124–148; that stretch reads PKKKAKKAKSPKKKSSKKSSNKSNN.

The protein belongs to the histone H1/H5 family. As to expression, sperm.

The protein resides in the nucleus. It localises to the chromosome. Functionally, linker histones are implicated in chromatin remodeling and/or transcriptional regulation during spermiogenesis, the process of spermatid maturation into spermatozoa. The protein is Sperm-specific protein PHI-2B of Mytilus californianus (California mussel).